The sequence spans 1057 residues: Hemophilin receptor (1057 aa).

The region spanning 168-285 is the TBDR plug domain; the sequence is KVYDANRSSV…VGGAVVVKTL (118 aa). Positions 296–1057 constitute a TBDR beta-barrel domain; it reads SFGAELKVEG…TMKISWTTKF (762 aa).

This sequence belongs to the TonB-dependent receptor family.

It is found in the cell outer membrane. Functionally, part of a high affinity heme acquisition system. Functions as a gateway for heme entry into the bacterial cell, enabling growth on hemoprotein sources. Can acquire heme directly from hemoprotein reservoirs, however, HphA likely enhances the efficiency of this process by delivering heme to HphR. Is essential for virulence, bacterial dissemination and growth in the blood. This Acinetobacter baumannii protein is Hemophilin receptor.